A 253-amino-acid polypeptide reads, in one-letter code: MLIDWFTVIAELVNFLILVWLLKRFLYEPVLKAIDEREKKIASELQHAADVEKEAESRLIELQRKNEAFDNAHAQMIKDAEQEAVEEKRTLLNEAHREYDALRMRLQETLKHEETSLESRVTGRISAEVFSIARKVLQDLSGSSLEAQIADVFCQRLRESDPEDVAAMKDAVSRKSLNPLVRSTFPLSSSLQERIQAVVRDVFSIDTQLRFEEGDDMVGGIELSMNGHSVSWSVRSYLDSLEKMTAELLEGAE.

The chain crosses the membrane as a helical span at residues 2 to 22; that stretch reads LIDWFTVIAELVNFLILVWLL.

This sequence belongs to the ATPase B chain family. In terms of assembly, F-type ATPases have 2 components, F(1) - the catalytic core - and F(0) - the membrane proton channel. F(1) has five subunits: alpha(3), beta(3), gamma(1), delta(1), epsilon(1). F(0) has four main subunits: a(1), b(2) and c(10-14). The alpha and beta chains form an alternating ring which encloses part of the gamma chain. F(1) is attached to F(0) by a central stalk formed by the gamma and epsilon chains, while a peripheral stalk is formed by the delta and b chains.

It is found in the cell inner membrane. Its function is as follows. F(1)F(0) ATP synthase produces ATP from ADP in the presence of a proton or sodium gradient. F-type ATPases consist of two structural domains, F(1) containing the extramembraneous catalytic core and F(0) containing the membrane proton channel, linked together by a central stalk and a peripheral stalk. During catalysis, ATP synthesis in the catalytic domain of F(1) is coupled via a rotary mechanism of the central stalk subunits to proton translocation. Component of the F(0) channel, it forms part of the peripheral stalk, linking F(1) to F(0). This Prosthecochloris aestuarii (strain DSM 271 / SK 413) protein is ATP synthase subunit b 1.